The following is a 140-amino-acid chain: Nucleoside diphosphate kinase (140 aa).

6 residues coordinate ATP: Lys-11, Phe-59, Arg-87, Thr-93, Arg-104, and Asn-114. His-117 serves as the catalytic Pros-phosphohistidine intermediate.

It belongs to the NDK family. Homotetramer. Mg(2+) is required as a cofactor.

It localises to the cytoplasm. The enzyme catalyses a 2'-deoxyribonucleoside 5'-diphosphate + ATP = a 2'-deoxyribonucleoside 5'-triphosphate + ADP. It catalyses the reaction a ribonucleoside 5'-diphosphate + ATP = a ribonucleoside 5'-triphosphate + ADP. Functionally, major role in the synthesis of nucleoside triphosphates other than ATP. The ATP gamma phosphate is transferred to the NDP beta phosphate via a ping-pong mechanism, using a phosphorylated active-site intermediate. The protein is Nucleoside diphosphate kinase of Cereibacter sphaeroides (strain ATCC 17029 / ATH 2.4.9) (Rhodobacter sphaeroides).